The primary structure comprises 212 residues: Pyridoxine/pyridoxamine 5'-phosphate oxidase (212 aa).

Substrate is bound by residues arginine 8 to tyrosine 11 and lysine 66. Residues arginine 61–lysine 66, phenylalanine 76–threonine 77, arginine 82, lysine 83, and glutamine 105 each bind FMN. Residues tyrosine 123, arginine 127, and serine 131 each coordinate substrate. FMN is bound by residues glutamine 140 to serine 141 and tryptophan 184. A substrate-binding site is contributed by arginine 190–histidine 192. Residue arginine 194 participates in FMN binding.

This sequence belongs to the pyridoxamine 5'-phosphate oxidase family. As to quaternary structure, homodimer. Requires FMN as cofactor.

It carries out the reaction pyridoxamine 5'-phosphate + O2 + H2O = pyridoxal 5'-phosphate + H2O2 + NH4(+). It catalyses the reaction pyridoxine 5'-phosphate + O2 = pyridoxal 5'-phosphate + H2O2. It participates in cofactor metabolism; pyridoxal 5'-phosphate salvage; pyridoxal 5'-phosphate from pyridoxamine 5'-phosphate: step 1/1. It functions in the pathway cofactor metabolism; pyridoxal 5'-phosphate salvage; pyridoxal 5'-phosphate from pyridoxine 5'-phosphate: step 1/1. Its function is as follows. Catalyzes the oxidation of either pyridoxine 5'-phosphate (PNP) or pyridoxamine 5'-phosphate (PMP) into pyridoxal 5'-phosphate (PLP). The polypeptide is Pyridoxine/pyridoxamine 5'-phosphate oxidase (Cupriavidus taiwanensis (strain DSM 17343 / BCRC 17206 / CCUG 44338 / CIP 107171 / LMG 19424 / R1) (Ralstonia taiwanensis (strain LMG 19424))).